The following is a 431-amino-acid chain: Elongation factor 1-gamma (431 aa).

The region spanning V2–G84 is the GST N-terminal domain. The 127-residue stretch at C86–F212 folds into the GST C-terminal domain. The disordered stretch occupies residues K223–A261. Low complexity predominate over residues A226 to Q236. Positions K237–E254 are enriched in basic and acidic residues. The region spanning S272–K431 is the EF-1-gamma C-terminal domain. Position 294 is a phosphoserine (S294).

In terms of assembly, interacts with microtubules. May interact with BicDR; the interaction is probably indirect. Interacts (via C-terminus) with Doa; the interaction is probably direct, is transient and leads to phosphorylation of eEF1gamma by Doa. EF-1 is composed of four subunits: alpha, beta, delta, and gamma. In terms of processing, phosphorylated on Ser-294 by LAMMER kinases, including Doa. Phosphorylation on Ser-294 by Doa is required for negative regulation of microtubule-based transport.

It is found in the cytoplasm. Its subcellular location is the nucleus. The protein resides in the cytoskeleton. Microtubule binding protein involved in regulation of microtubule-based transport. Probably plays a role in anchoring the EF-1 complex to other cellular components. Probably involved in formation and/or development of mechanosensory organs during metamorphosis. Required for cellular and organismal viability. Not essential for the innate immune response to bacterial infection. The chain is Elongation factor 1-gamma from Drosophila melanogaster (Fruit fly).